Consider the following 92-residue polypeptide: MNLSTLLLTLACISQLHGGSANQATDIMRRQLRMGKAVASLLENQHQSARELEENIMADEDNKANEVQADVSQFRVRRLRSPNYVELIELRG.

Residues 1–21 (MNLSTLLLTLACISQLHGGSA) form the signal peptide. The short motif at 30–33 (RQLR) is the RxLR element.

Belongs to the RxLR effector family.

The protein localises to the secreted. Its subcellular location is the host nucleus. It is found in the host cytoplasm. Functionally, secreted effector that completely suppresses the host cell death induced by cell death-inducing proteins. This Plasmopara viticola (Downy mildew of grapevine) protein is Secreted RxLR effector protein 21.